A 215-amino-acid polypeptide reads, in one-letter code: 3-isopropylmalate dehydratase small subunit (215 aa).

Belongs to the LeuD family. LeuD type 1 subfamily. As to quaternary structure, heterodimer of LeuC and LeuD.

It carries out the reaction (2R,3S)-3-isopropylmalate = (2S)-2-isopropylmalate. The protein operates within amino-acid biosynthesis; L-leucine biosynthesis; L-leucine from 3-methyl-2-oxobutanoate: step 2/4. Catalyzes the isomerization between 2-isopropylmalate and 3-isopropylmalate, via the formation of 2-isopropylmaleate. The chain is 3-isopropylmalate dehydratase small subunit from Chromohalobacter salexigens (strain ATCC BAA-138 / DSM 3043 / CIP 106854 / NCIMB 13768 / 1H11).